We begin with the raw amino-acid sequence, 959 residues long: Translation initiation factor IF-2 (959 aa).

Basic and acidic residues predominate over residues methionine 1 to threonine 10. The segment at methionine 1 to isoleucine 374 is disordered. Over residues glutamate 27–histidine 37 the composition is skewed to polar residues. Low complexity-rich tracts occupy residues alanine 63–proline 118 and glutamine 128–proline 138. Basic and acidic residues-rich tracts occupy residues serine 154–lysine 225 and alanine 232–arginine 241. Low complexity predominate over residues glycine 246 to alanine 284. A compositionally biased stretch (basic and acidic residues) spans proline 318–arginine 333. One can recognise a tr-type G domain in the interval serine 457 to lysine 626. Residues glycine 466–threonine 473 form a G1 region. Glycine 466 to threonine 473 contacts GTP. Residues glycine 491–histidine 495 form a G2 region. Positions aspartate 512–glycine 515 are G3. GTP is bound by residues aspartate 512–histidine 516 and asparagine 566–aspartate 569. Residues asparagine 566–aspartate 569 are G4. A G5 region spans residues serine 602–lysine 604.

Belongs to the TRAFAC class translation factor GTPase superfamily. Classic translation factor GTPase family. IF-2 subfamily.

It localises to the cytoplasm. In terms of biological role, one of the essential components for the initiation of protein synthesis. Protects formylmethionyl-tRNA from spontaneous hydrolysis and promotes its binding to the 30S ribosomal subunits. Also involved in the hydrolysis of GTP during the formation of the 70S ribosomal complex. In Brucella ovis (strain ATCC 25840 / 63/290 / NCTC 10512), this protein is Translation initiation factor IF-2.